Reading from the N-terminus, the 261-residue chain is Signal recognition particle SEC65 subunit (261 aa).

The protein belongs to the SRP19 family. Fungal signal recognition particle consists of a 7S RNA molecule (scR1) and at least six protein subunits: SRP72, SRP68, SRP54, SEC65, SRP21 and SRP14.

The protein localises to the cytoplasm. Its function is as follows. Signal-recognition-particle assembly has a crucial role in targeting secretory proteins to the rough endoplasmic reticulum membrane. It must be involved intimately in the translocation of a wide variety of protein substrates. This chain is Signal recognition particle SEC65 subunit (SEC65), found in Eremothecium gossypii (strain ATCC 10895 / CBS 109.51 / FGSC 9923 / NRRL Y-1056) (Yeast).